The chain runs to 445 residues: 3-phosphoshikimate 1-carboxyvinyltransferase (445 aa).

Residues Lys-25, Ser-26, and Arg-30 each coordinate 3-phosphoshikimate. Lys-25 contacts phosphoenolpyruvate. Phosphoenolpyruvate contacts are provided by Gly-98 and Arg-126. 3-phosphoshikimate contacts are provided by Ser-171, Gln-173, Asp-324, and Lys-351. Gln-173 lines the phosphoenolpyruvate pocket. The Proton acceptor role is filled by Asp-324. Phosphoenolpyruvate-binding residues include Arg-355 and Arg-398.

It belongs to the EPSP synthase family. As to quaternary structure, monomer.

The protein localises to the cytoplasm. The catalysed reaction is 3-phosphoshikimate + phosphoenolpyruvate = 5-O-(1-carboxyvinyl)-3-phosphoshikimate + phosphate. The protein operates within metabolic intermediate biosynthesis; chorismate biosynthesis; chorismate from D-erythrose 4-phosphate and phosphoenolpyruvate: step 6/7. Its function is as follows. Catalyzes the transfer of the enolpyruvyl moiety of phosphoenolpyruvate (PEP) to the 5-hydroxyl of shikimate-3-phosphate (S3P) to produce enolpyruvyl shikimate-3-phosphate and inorganic phosphate. In Hydrogenovibrio crunogenus (strain DSM 25203 / XCL-2) (Thiomicrospira crunogena), this protein is 3-phosphoshikimate 1-carboxyvinyltransferase.